A 146-amino-acid polypeptide reads, in one-letter code: UPF0260 protein Sbal_1871 (146 aa).

It belongs to the UPF0260 family.

The sequence is that of UPF0260 protein Sbal_1871 from Shewanella baltica (strain OS155 / ATCC BAA-1091).